Here is a 233-residue protein sequence, read N- to C-terminus: Ribosomal RNA small subunit methyltransferase G (233 aa).

S-adenosyl-L-methionine is bound by residues glycine 91, methionine 96, 142-143 (VE), and arginine 157.

This sequence belongs to the methyltransferase superfamily. RNA methyltransferase RsmG family.

Its subcellular location is the cytoplasm. It carries out the reaction guanosine(527) in 16S rRNA + S-adenosyl-L-methionine = N(7)-methylguanosine(527) in 16S rRNA + S-adenosyl-L-homocysteine. Functionally, specifically methylates the N7 position of guanine in position 527 of 16S rRNA. The polypeptide is Ribosomal RNA small subunit methyltransferase G (Cupriavidus necator (strain ATCC 17699 / DSM 428 / KCTC 22496 / NCIMB 10442 / H16 / Stanier 337) (Ralstonia eutropha)).